The sequence spans 511 residues: MFS-type transporper mpsC (511 aa).

Positions 1–35 (MTSSTESKHSNDESTDLEKQDAEESHGLPEERKQD) are enriched in basic and acidic residues. Positions 1 to 65 (MTSSTESKHS…PDDPANPMNW (65 aa)) are disordered. A run of 7 helical transmembrane segments spans residues 74–94 (VVMASLTTLFANITSTAFAPA), 108–128 (ITAALTVSIYLLGFAFGPLVI), 147–167 (ITVAFLIGCAQAKNLGMFLVF), 169–189 (LITGIAGSGPGTIGGGTIADV), 201–221 (AFAMGPLMGPVLGPLMSGFIA), 228–248 (WVFRVLCIATGVMTIVLYFVM), and 303–323 (PITLLLSLYCAFVFGLLILLF). An N-linked (GlcNAc...) asparagine glycan is attached at Asn337. 5 helical membrane-spanning segments follow: residues 342-362 (GLSYLGLGFGLAIGLVLFGML), 383-403 (LLLMVWFAPVIPGGFFWYGWT), 411-431 (ILPMMGTSLIGMGALMVMMPI), 443-465 (VAASALAANTLLRSLAGCFLPLA), and 476-496 (GWGNTLLGFIAIGFTCLPILF).

This sequence belongs to the major facilitator superfamily.

Its subcellular location is the membrane. Its function is as follows. MFS-type transporper; part of the gene cluster that mediates the biosynthesis of macrophasetins, 3-decalinoyltetramic acids (DTAs) which feature a tetramate (pyrrolidine-2,4-dione) unit connected to a decalin fragment and that have potent bioactivities. Efflux pump that might be required for efficient secretion of macrophasetins. This chain is MFS-type transporper mpsC, found in Macrophomina phaseolina (strain MS6) (Charcoal rot fungus).